Consider the following 270-residue polypeptide: tRNA pseudouridine synthase A (270 aa).

The active-site Nucleophile is aspartate 60. The RNA binding stretch occupies residues 107–111; it reads FHARF. Tyrosine 118 provides a ligand contact to substrate. The tract at residues 168–172 is interaction with tRNA; sequence QCQSR.

It belongs to the tRNA pseudouridine synthase TruA family. As to quaternary structure, homodimer.

It catalyses the reaction uridine(38/39/40) in tRNA = pseudouridine(38/39/40) in tRNA. In terms of biological role, formation of pseudouridine at positions 38, 39 and 40 in the anticodon stem and loop of transfer RNAs. This Enterobacter sp. (strain 638) protein is tRNA pseudouridine synthase A.